We begin with the raw amino-acid sequence, 125 residues long: Large ribosomal subunit protein bL12 (125 aa).

This sequence belongs to the bacterial ribosomal protein bL12 family. In terms of assembly, homodimer. Part of the ribosomal stalk of the 50S ribosomal subunit. Forms a multimeric L10(L12)X complex, where L10 forms an elongated spine to which 2 to 4 L12 dimers bind in a sequential fashion. Binds GTP-bound translation factors.

Forms part of the ribosomal stalk which helps the ribosome interact with GTP-bound translation factors. Is thus essential for accurate translation. This is Large ribosomal subunit protein bL12 from Parabacteroides distasonis (strain ATCC 8503 / DSM 20701 / CIP 104284 / JCM 5825 / NCTC 11152).